Consider the following 137-residue polypeptide: ATP synthase epsilon chain (137 aa).

Belongs to the ATPase epsilon chain family. In terms of assembly, F-type ATPases have 2 components, CF(1) - the catalytic core - and CF(0) - the membrane proton channel. CF(1) has five subunits: alpha(3), beta(3), gamma(1), delta(1), epsilon(1). CF(0) has three main subunits: a, b and c.

The protein localises to the cellular thylakoid membrane. Produces ATP from ADP in the presence of a proton gradient across the membrane. The chain is ATP synthase epsilon chain from Trichormus variabilis (strain ATCC 29413 / PCC 7937) (Anabaena variabilis).